The sequence spans 88 residues: Small ribosomal subunit protein uS15 (88 aa).

Belongs to the universal ribosomal protein uS15 family. In terms of assembly, part of the 30S ribosomal subunit. Forms a bridge to the 50S subunit in the 70S ribosome, contacting the 23S rRNA.

In terms of biological role, one of the primary rRNA binding proteins, it binds directly to 16S rRNA where it helps nucleate assembly of the platform of the 30S subunit by binding and bridging several RNA helices of the 16S rRNA. Functionally, forms an intersubunit bridge (bridge B4) with the 23S rRNA of the 50S subunit in the ribosome. In Borreliella burgdorferi (strain ATCC 35210 / DSM 4680 / CIP 102532 / B31) (Borrelia burgdorferi), this protein is Small ribosomal subunit protein uS15.